Here is a 294-residue protein sequence, read N- to C-terminus: 33 kDa chaperonin (294 aa).

Cystine bridges form between C236/C238 and C269/C272.

The protein belongs to the HSP33 family. Under oxidizing conditions two disulfide bonds are formed involving the reactive cysteines. Under reducing conditions zinc is bound to the reactive cysteines and the protein is inactive.

The protein resides in the cytoplasm. Redox regulated molecular chaperone. Protects both thermally unfolding and oxidatively damaged proteins from irreversible aggregation. Plays an important role in the bacterial defense system toward oxidative stress. The chain is 33 kDa chaperonin from Desulforamulus reducens (strain ATCC BAA-1160 / DSM 100696 / MI-1) (Desulfotomaculum reducens).